The sequence spans 40 residues: Photosystem II reaction center protein L (40 aa).

Residues serine 19–phenylalanine 39 form a helical membrane-spanning segment.

Belongs to the PsbL family. In terms of assembly, PSII is composed of 1 copy each of membrane proteins PsbA, PsbB, PsbC, PsbD, PsbE, PsbF, PsbH, PsbI, PsbJ, PsbK, PsbL, PsbM, PsbT, PsbX, PsbY, PsbZ, Psb30/Ycf12, peripheral proteins PsbO, CyanoQ (PsbQ), PsbU, PsbV and a large number of cofactors. It forms dimeric complexes.

It is found in the cellular thylakoid membrane. One of the components of the core complex of photosystem II (PSII). PSII is a light-driven water:plastoquinone oxidoreductase that uses light energy to abstract electrons from H(2)O, generating O(2) and a proton gradient subsequently used for ATP formation. It consists of a core antenna complex that captures photons, and an electron transfer chain that converts photonic excitation into a charge separation. This subunit is found at the monomer-monomer interface and is required for correct PSII assembly and/or dimerization. This Synechococcus elongatus (strain ATCC 33912 / PCC 7942 / FACHB-805) (Anacystis nidulans R2) protein is Photosystem II reaction center protein L.